The chain runs to 826 residues: Arsenite oxidase subunit AioA (826 aa).

Cys22, Cys25, and Cys29 together coordinate [3Fe-4S] cluster. Substrate contacts are provided by His196, Glu204, Arg420, and His424.

The protein belongs to the prokaryotic molybdopterin-containing oxidoreductase family. Heterodimer consisting of a large and a small subunit. The cofactor is [3Fe-4S] cluster. Requires Mo-bis(molybdopterin guanine dinucleotide) as cofactor.

The catalysed reaction is 2 oxidized [azurin] + arsenite + H2O = 2 reduced [azurin] + arsenate + 3 H(+). In terms of biological role, involved in the detoxification of arsenic. Oxidizes As(III)O3(3-) (arsenite) to the somewhat less toxic As(V)O4(3-) (arsenate). This Alcaligenes faecalis protein is Arsenite oxidase subunit AioA (aioA).